We begin with the raw amino-acid sequence, 442 residues long: Exodeoxyribonuclease 7 large subunit (442 aa).

Positions 1 to 38 are disordered; that stretch reads MSDSTQFSLFDSGDDEPAKVTAPKRKVARKKRSSSSSD. Positions 22-33 are enriched in basic residues; that stretch reads APKRKVARKKRS.

The protein belongs to the XseA family. Heterooligomer composed of large and small subunits.

The protein resides in the cytoplasm. It carries out the reaction Exonucleolytic cleavage in either 5'- to 3'- or 3'- to 5'-direction to yield nucleoside 5'-phosphates.. In terms of biological role, bidirectionally degrades single-stranded DNA into large acid-insoluble oligonucleotides, which are then degraded further into small acid-soluble oligonucleotides. This is Exodeoxyribonuclease 7 large subunit from Rhodopirellula baltica (strain DSM 10527 / NCIMB 13988 / SH1).